The sequence spans 232 residues: Small ribosomal subunit protein uS3 (232 aa).

Residues 39–107 (IRAILHKELK…DVVINIVEIR (69 aa)) form the KH type-2 domain.

It belongs to the universal ribosomal protein uS3 family. As to quaternary structure, part of the 30S ribosomal subunit. Forms a tight complex with proteins S10 and S14.

In terms of biological role, binds the lower part of the 30S subunit head. Binds mRNA in the 70S ribosome, positioning it for translation. The chain is Small ribosomal subunit protein uS3 from Rhodopseudomonas palustris (strain BisA53).